Here is a 198-residue protein sequence, read N- to C-terminus: Cerebellin-4 (198 aa).

The N-terminal stretch at 1–24 (MGSARRALSVVPAVLLILVLPVWA) is a signal peptide. N-linked (GlcNAc...) asparagine glycosylation is found at Asn-26 and Asn-85. Residues 63 to 198 (AANSKVAFSA…TFSGFLVFPL (136 aa)) enclose the C1q domain.

In terms of assembly, homohexamer; disulfide-linked homotrimers. The trimers are assembled via the globular C1q domains. The trimers associate via N-terminal cysteine residues to form disulfide-linked hexamers. May form oligomers with CBLN1, CBLN2 and CBLN3 prior to secretion. Once secreted, does not interact with other CBLN family members. Strongly interacts with DCC in a NTN1-displaceable fashion. Weakly binds to NRXN1 and NRXN2 long and short isoforms produced by alternative promoter usage. Interaction with NRXN3 short isoform is hardly detectable; no interaction at all with NRXN3 long isoform. Does not interact with NEO1, GRID1 and GRID2. In terms of processing, sialoglycoprotein. As to expression, expressed in brain with high levels in particular thalamic nuclei. In the thalamus, predominantly expressed in neurons within the parafascicular nucleus. Found in the hippocampus, mostly in the dendrites and somata of pyramidal neurons (at protein level). Very low or no expression in most other brain regions. Highly expressed in the ventral medial habenula.

The protein localises to the secreted. It localises to the synapse. Its function is as follows. Acts as a synaptic organizer in specific subsets of neurons in the brain. Essential for the formation and maintenance of inhibitory GABAergic synapses. Promotes the development of dendrite-targeting inhibitory GABAergic synapses made by somatostatin-positive interneurons. May contribute to the function of ventral medial habenula region of the brain implicated in the regulation of anxiety-related behaviors. May play a role in CBLN3 export from the endoplasmic reticulum and secretion. The chain is Cerebellin-4 (Cbln4) from Mus musculus (Mouse).